The sequence spans 165 residues: Cell division protein SepF (165 aa).

Residues 23-75 (DEYGDYAGDYETQETAPVATRSSKRESRPAPVSDLSERRRPASGPTGVVAELS) form a disordered region.

It belongs to the SepF family. In terms of assembly, homodimer. Interacts with FtsZ.

The protein localises to the cytoplasm. Functionally, cell division protein that is part of the divisome complex and is recruited early to the Z-ring. Probably stimulates Z-ring formation, perhaps through the cross-linking of FtsZ protofilaments. Its function overlaps with FtsA. In Nocardioides sp. (strain ATCC BAA-499 / JS614), this protein is Cell division protein SepF.